The sequence spans 293 residues: Foldase protein PrsA 2 (293 aa).

The N-terminal stretch at 1-20 (MKKKLILGLVMMMALFSLAA) is a signal peptide. C21 carries N-palmitoyl cysteine lipidation. C21 is lipidated: S-diacylglycerol cysteine. The PpiC domain occupies 135-226 (QPDITVSHIL…YGYHIIQMDK (92 aa)).

This sequence belongs to the PrsA family.

It is found in the cell membrane. It catalyses the reaction [protein]-peptidylproline (omega=180) = [protein]-peptidylproline (omega=0). In terms of biological role, plays a major role in protein secretion by helping the post-translocational extracellular folding of several secreted proteins. The polypeptide is Foldase protein PrsA 2 (prsA2) (Listeria monocytogenes serovar 1/2a (strain ATCC BAA-679 / EGD-e)).